The chain runs to 57 residues: Major exported protein (57 aa).

This sequence belongs to the hcp1 family. As to quaternary structure, homodimer.

Its subcellular location is the secreted. This is Major exported protein from Pseudomonas syringae pv. ribicola.